Here is a 313-residue protein sequence, read N- to C-terminus: Methionyl-tRNA formyltransferase (313 aa).

Position 113–116 (113–116 (SLLP)) interacts with (6S)-5,6,7,8-tetrahydrofolate.

The protein belongs to the Fmt family.

It carries out the reaction L-methionyl-tRNA(fMet) + (6R)-10-formyltetrahydrofolate = N-formyl-L-methionyl-tRNA(fMet) + (6S)-5,6,7,8-tetrahydrofolate + H(+). In terms of biological role, attaches a formyl group to the free amino group of methionyl-tRNA(fMet). The formyl group appears to play a dual role in the initiator identity of N-formylmethionyl-tRNA by promoting its recognition by IF2 and preventing the misappropriation of this tRNA by the elongation apparatus. The sequence is that of Methionyl-tRNA formyltransferase from Francisella tularensis subsp. novicida (strain U112).